Consider the following 182-residue polypeptide: MYSFILDCTTRTAKKVKMHVIDIYNKYHELLVFCRQQLIQKNFEMSKSNAVELYSKRQDEIHDEYQKRKRREIKVIKSDLIELRRQKDEVIENMKTFKHDVVKYKKLYEDLEQEIKILERKNKNLEIETNSDSGNLMVYIANIENILSKCTNKSLKRNIEKQLYKMDEIAYKLKDNFREEFE.

Residues 66–133 (QKRKRREIKV…NLEIETNSDS (68 aa)) are a coiled coil.

This is an uncharacterized protein from Acanthamoeba polyphaga (Amoeba).